Here is a 405-residue protein sequence, read N- to C-terminus: ATP phosphoribosyltransferase regulatory subunit (405 aa).

This sequence belongs to the class-II aminoacyl-tRNA synthetase family. HisZ subfamily. Heteromultimer composed of HisG and HisZ subunits.

The protein localises to the cytoplasm. The protein operates within amino-acid biosynthesis; L-histidine biosynthesis; L-histidine from 5-phospho-alpha-D-ribose 1-diphosphate: step 1/9. In terms of biological role, required for the first step of histidine biosynthesis. May allow the feedback regulation of ATP phosphoribosyltransferase activity by histidine. The chain is ATP phosphoribosyltransferase regulatory subunit from Oceanobacillus iheyensis (strain DSM 14371 / CIP 107618 / JCM 11309 / KCTC 3954 / HTE831).